The following is a 70-amino-acid chain: U2-agatoxin-Ao1p (70 aa).

The N-terminal stretch at 1-20 is a signal peptide; that stretch reads MRAIISLILISAMVFSMIAA. Residues 21–34 constitute a propeptide that is removed on maturation; sequence VPXXEGLQLSEDER. Intrachain disulfides connect cysteine 37–cysteine 53, cysteine 44–cysteine 58, and cysteine 52–cysteine 68. Leucine amide is present on leucine 69.

The protein belongs to the neurotoxin 01 (U2-agtx) family. Expressed by the venom gland.

Its subcellular location is the secreted. Functionally, insect active toxin causing rapid but reversible paralysis in crickets. No activity shown in mammals. Does not show effect on mammalian voltage-gated calcium channels. The protein is U2-agatoxin-Ao1p of Agelena orientalis (Funnel-web spider).